A 200-amino-acid polypeptide reads, in one-letter code: Outer-membrane lipoprotein LolB (200 aa).

The signal sequence occupies residues 1–18 (MRRGRLLIAGLAALVLSA). C19 carries N-palmitoyl cysteine lipidation. Residue C19 is the site of S-diacylglycerol cysteine attachment.

Belongs to the LolB family. Monomer.

It localises to the cell outer membrane. Its function is as follows. Plays a critical role in the incorporation of lipoproteins in the outer membrane after they are released by the LolA protein. The polypeptide is Outer-membrane lipoprotein LolB (Alkalilimnicola ehrlichii (strain ATCC BAA-1101 / DSM 17681 / MLHE-1)).